A 90-amino-acid chain; its full sequence is Defensin-like protein 293 (90 aa).

The signal sequence occupies residues methionine 1–alanine 26. Cystine bridges form between cysteine 63-cysteine 83, cysteine 69-cysteine 88, and cysteine 75-cysteine 90.

Belongs to the DEFL family.

The protein resides in the secreted. The sequence is that of Defensin-like protein 293 from Arabidopsis thaliana (Mouse-ear cress).